The following is a 189-amino-acid chain: dCTP deaminase (189 aa).

Residues 112–117 (KSTYAR), 136–138 (TLE), glutamine 157, tyrosine 171, and glutamine 181 each bind dCTP. Glutamate 138 acts as the Proton donor/acceptor in catalysis.

The protein belongs to the dCTP deaminase family. As to quaternary structure, homotrimer.

The catalysed reaction is dCTP + H2O + H(+) = dUTP + NH4(+). It participates in pyrimidine metabolism; dUMP biosynthesis; dUMP from dCTP (dUTP route): step 1/2. Its function is as follows. Catalyzes the deamination of dCTP to dUTP. In Paraburkholderia phymatum (strain DSM 17167 / CIP 108236 / LMG 21445 / STM815) (Burkholderia phymatum), this protein is dCTP deaminase.